Consider the following 304-residue polypeptide: MGVRKLKPVTNGTRHAVLYDFEEIEKLVRKGKEWVLLKKNQVEPEKSLLKWWHRAKGRSRQRGNITARHRGGGHKKLYRIIDFKRDKSLVPAKVVSIEYDPFRSARICLLHYADGEKRYIIWPEGLKVGDTVMSISWEDAEAGKPLPEIKPGNAMPLKYIPEGTIVHNIEFIPGKGGQIARAAGTWAQVLGRSTRKGYVLVRMPSGEVRMIHERCMATVGRVGLAEHELVKLGKAGRARWLGWRPHTRGTAMNPVDHPHGGGEGRTRGKHPESPWGWKTKGYKTRRGKKYSDQFIVTRRDGRPL.

Positions histidine 246–tyrosine 282 are disordered. Over residues aspartate 256 to glutamate 272 the composition is skewed to basic and acidic residues.

Belongs to the universal ribosomal protein uL2 family. Part of the 50S ribosomal subunit. Forms a bridge to the 30S subunit in the 70S ribosome.

Its function is as follows. One of the primary rRNA binding proteins. Required for association of the 30S and 50S subunits to form the 70S ribosome, for tRNA binding and peptide bond formation. It has been suggested to have peptidyltransferase activity; this is somewhat controversial. Makes several contacts with the 16S rRNA in the 70S ribosome. In Aquifex aeolicus (strain VF5), this protein is Large ribosomal subunit protein uL2.